A 333-amino-acid polypeptide reads, in one-letter code: Probable pyridoxal reductase 2 (333 aa).

Tyr52 (proton donor) is an active-site residue.

Belongs to the aldo/keto reductase family.

It localises to the cytoplasm. The catalysed reaction is pyridoxine + NADP(+) = pyridoxal + NADPH + H(+). Its function is as follows. Catalyzes the reduction of pyridoxal (PL) with NADPH and oxidation of pyridoxine (PN) with NADP(+). This is Probable pyridoxal reductase 2 from Schizosaccharomyces pombe (strain 972 / ATCC 24843) (Fission yeast).